An 84-amino-acid polypeptide reads, in one-letter code: U8-theraphotoxin-Hhn1a (84 aa).

Positions 1-21 are cleaved as a signal peptide; sequence MKVVLLECLVWMMAMMELVSC. 5 cysteine pairs are disulfide-bonded: Cys23–Cys35, Cys29–Cys44, Cys34–Cys67, Cys54–Cys75, and Cys69–Cys81.

This sequence belongs to the AVIT (prokineticin) family. In terms of tissue distribution, expressed by the venom gland.

The protein localises to the secreted. This chain is U8-theraphotoxin-Hhn1a, found in Cyriopagopus hainanus (Chinese bird spider).